The following is a 304-amino-acid chain: Quinolinate synthase (304 aa).

Residues His23 and Ser40 each coordinate iminosuccinate. Position 85 (Cys85) interacts with [4Fe-4S] cluster. Iminosuccinate is bound by residues 111 to 113 (YIN) and Ser128. [4Fe-4S] cluster is bound at residue Cys171. Iminosuccinate is bound by residues 197 to 199 (HPE) and Thr214. Cys259 serves as a coordination point for [4Fe-4S] cluster.

The protein belongs to the quinolinate synthase family. Type 2 subfamily. [4Fe-4S] cluster is required as a cofactor.

The protein localises to the cytoplasm. The catalysed reaction is iminosuccinate + dihydroxyacetone phosphate = quinolinate + phosphate + 2 H2O + H(+). It functions in the pathway cofactor biosynthesis; NAD(+) biosynthesis; quinolinate from iminoaspartate: step 1/1. Functionally, catalyzes the condensation of iminoaspartate with dihydroxyacetone phosphate to form quinolinate. The chain is Quinolinate synthase from Clostridioides difficile (strain 630) (Peptoclostridium difficile).